The chain runs to 280 residues: UPF0276 protein CC_3255 (280 aa).

This sequence belongs to the UPF0276 family.

The chain is UPF0276 protein CC_3255 from Caulobacter vibrioides (strain ATCC 19089 / CIP 103742 / CB 15) (Caulobacter crescentus).